We begin with the raw amino-acid sequence, 338 residues long: Ketol-acid reductoisomerase (NADP(+)) (338 aa).

The KARI N-terminal Rossmann domain maps to 1–181; the sequence is MKVFYDKDAD…GGGKAGIIET (181 aa). Residues 24 to 27, arginine 47, and serine 52 contribute to the NADP(+) site; that span reads YGSQ. The active site involves histidine 107. Glycine 133 provides a ligand contact to NADP(+). The KARI C-terminal knotted domain occupies 182–327; sequence NFREETETDL…EKLRAMMPWI (146 aa). Positions 190, 194, 226, and 230 each coordinate Mg(2+). Residue serine 251 coordinates substrate.

This sequence belongs to the ketol-acid reductoisomerase family. Mg(2+) serves as cofactor.

The enzyme catalyses (2R)-2,3-dihydroxy-3-methylbutanoate + NADP(+) = (2S)-2-acetolactate + NADPH + H(+). The catalysed reaction is (2R,3R)-2,3-dihydroxy-3-methylpentanoate + NADP(+) = (S)-2-ethyl-2-hydroxy-3-oxobutanoate + NADPH + H(+). It functions in the pathway amino-acid biosynthesis; L-isoleucine biosynthesis; L-isoleucine from 2-oxobutanoate: step 2/4. Its pathway is amino-acid biosynthesis; L-valine biosynthesis; L-valine from pyruvate: step 2/4. Functionally, involved in the biosynthesis of branched-chain amino acids (BCAA). Catalyzes an alkyl-migration followed by a ketol-acid reduction of (S)-2-acetolactate (S2AL) to yield (R)-2,3-dihydroxy-isovalerate. In the isomerase reaction, S2AL is rearranged via a Mg-dependent methyl migration to produce 3-hydroxy-3-methyl-2-ketobutyrate (HMKB). In the reductase reaction, this 2-ketoacid undergoes a metal-dependent reduction by NADPH to yield (R)-2,3-dihydroxy-isovalerate. This is Ketol-acid reductoisomerase (NADP(+)) from Leptothrix cholodnii (strain ATCC 51168 / LMG 8142 / SP-6) (Leptothrix discophora (strain SP-6)).